The sequence spans 354 residues: Guanine nucleotide-binding protein G(o) subunit alpha (354 aa).

Residue Gly2 is the site of N-myristoyl glycine attachment. Cys3 is lipidated: S-palmitoyl cysteine. Positions 32–354 constitute a G-alpha domain; the sequence is KDVKLLLLGA…ANNLRGCGLY (323 aa). The segment at 35–48 is G1 motif; that stretch reads KLLLLGAGESGKST. GTP is bound by residues Glu43, Lys46, Ser47, Thr48, Ser152, Leu176, Arg177, Thr178, and Arg179. Ser47 contributes to the Mg(2+) binding site. A G2 motif region spans residues 174–182; that stretch reads DILRTRVKT. Thr182 is a Mg(2+) binding site. Positions 197 to 206 are G3 motif; it reads FRLFDVGGQR. A 5-glutamyl histamine modification is found at Gln205. The G4 motif stretch occupies residues 266–273; it reads ILFLNKKD. GTP-binding residues include Asn270, Asp273, and Cys325. The segment at 324 to 329 is G5 motif; sequence TCATDT. A lipid anchor (S-palmitoyl cysteine) is attached at Cys351.

Belongs to the G-alpha family. G(i/o/t/z) subfamily. G proteins are composed of 3 units; alpha, beta and gamma. The alpha chain contains the guanine nucleotide binding site. Forms a complex with GNB1 and GNG3. Interacts with RGS14. Interacts with RGS16. Interacts with RGS19. Interacts (when palmitoylated) with ADGRG3. In terms of processing, histaminylated at Gln-205 residues by TGM2.

The protein resides in the cell membrane. It localises to the membrane. It catalyses the reaction GTP + H2O = GDP + phosphate + H(+). With respect to regulation, the GTPase activity is promoted by GTPAse activators, such as RGS14, RGS16 and RGS19. In terms of biological role, guanine nucleotide-binding proteins (G proteins) function as transducers downstream of G protein-coupled receptors (GPCRs) in numerous signaling cascades. The alpha chain contains the guanine nucleotide binding site and alternates between an active, GTP-bound state and an inactive, GDP-bound state. Signaling by an activated GPCR promotes GDP release and GTP binding. The alpha subunit has a low GTPase activity that converts bound GTP to GDP, thereby terminating the signal. Both GDP release and GTP hydrolysis are modulated by numerous regulatory proteins. Signaling is mediated via effector proteins, such as adenylate cyclase. Inhibits adenylate cyclase activity, leading to decreased intracellular cAMP levels. This chain is Guanine nucleotide-binding protein G(o) subunit alpha (GNAO1), found in Bos taurus (Bovine).